The primary structure comprises 394 residues: 1-deoxy-D-xylulose 5-phosphate reductoisomerase (394 aa).

Residues T12, G13, S14, I15, K39, Q40, and N126 each contribute to the NADPH site. K127 is a binding site for 1-deoxy-D-xylulose 5-phosphate. NADPH is bound at residue E128. D152 contributes to the Mn(2+) binding site. The 1-deoxy-D-xylulose 5-phosphate site is built by S153, E154, S183, and H206. E154 contributes to the Mn(2+) binding site. G212 is an NADPH binding site. Positions 219, 224, 225, and 228 each coordinate 1-deoxy-D-xylulose 5-phosphate. E228 is a binding site for Mn(2+).

Belongs to the DXR family. Requires Mg(2+) as cofactor. Mn(2+) is required as a cofactor.

It carries out the reaction 2-C-methyl-D-erythritol 4-phosphate + NADP(+) = 1-deoxy-D-xylulose 5-phosphate + NADPH + H(+). It participates in isoprenoid biosynthesis; isopentenyl diphosphate biosynthesis via DXP pathway; isopentenyl diphosphate from 1-deoxy-D-xylulose 5-phosphate: step 1/6. Catalyzes the NADPH-dependent rearrangement and reduction of 1-deoxy-D-xylulose-5-phosphate (DXP) to 2-C-methyl-D-erythritol 4-phosphate (MEP). This chain is 1-deoxy-D-xylulose 5-phosphate reductoisomerase, found in Neisseria gonorrhoeae (strain ATCC 700825 / FA 1090).